The sequence spans 204 residues: Arginine exporter protein ArgO (204 aa).

A run of 6 helical transmembrane segments spans residues 1–21 (MFAV…PLGP), 37–57 (LMVA…GIFG), 67–87 (LLLG…GWGA), 111–131 (IIAT…DTFV), 147–167 (WFAL…ALLA), and 179–199 (VQRV…LQLA).

This sequence belongs to the LysE/ArgO transporter (TC 2.A.75) family.

The protein resides in the cell inner membrane. The enzyme catalyses L-arginine(in) = L-arginine(out). In terms of biological role, involved in the export of arginine. Important to control the intracellular level of arginine and the correct balance between arginine and lysine. This is Arginine exporter protein ArgO from Pectobacterium carotovorum subsp. carotovorum (strain PC1).